A 129-amino-acid chain; its full sequence is Ribosome-binding factor A (129 aa).

Belongs to the RbfA family. As to quaternary structure, monomer. Binds 30S ribosomal subunits, but not 50S ribosomal subunits or 70S ribosomes.

It localises to the cytoplasm. Functionally, one of several proteins that assist in the late maturation steps of the functional core of the 30S ribosomal subunit. Associates with free 30S ribosomal subunits (but not with 30S subunits that are part of 70S ribosomes or polysomes). Required for efficient processing of 16S rRNA. May interact with the 5'-terminal helix region of 16S rRNA. The sequence is that of Ribosome-binding factor A from Azotobacter vinelandii (strain DJ / ATCC BAA-1303).